Consider the following 125-residue polypeptide: Oxytocin-neurophysin 1 (125 aa).

An N-terminal signal peptide occupies residues 1–19 (MAGSSLACCLLGLLALTSA). A disulfide bond links Cys-20 and Cys-25. Glycine amide is present on Gly-28. Disulfide bonds link Cys-41-Cys-85, Cys-44-Cys-58, Cys-52-Cys-75, Cys-59-Cys-65, Cys-92-Cys-104, Cys-98-Cys-116, and Cys-105-Cys-110.

Belongs to the vasopressin/oxytocin family. In terms of assembly, interacts with oxytocin receptor (Ki=1.5 nM). Interacts with vasopressin V1aR/AVPR1A (Ki=37 nM), V1bR/AVPR1B (Ki=222 nM), and V2R/AVPR2 receptors (Ki=823 nM).

Neurophysin 1 specifically binds oxytocin. Functionally, oxytocin causes contraction of the smooth muscle of the uterus and of the mammary gland. Acts by binding to oxytocin receptor (OXTR). The protein is Oxytocin-neurophysin 1 (OXT) of Ovis aries (Sheep).